Consider the following 1243-residue polypeptide: Tau-tubulin kinase 2 (1243 aa).

One can recognise a Protein kinase domain in the interval tryptophan 21–isoleucine 284. ATP is bound by residues isoleucine 27–isoleucine 35 and lysine 50. Aspartate 141 functions as the Proton acceptor in the catalytic mechanism. Serine 445 is subject to Phosphoserine. The segment covering valine 674–serine 683 has biased composition (polar residues). Disordered stretches follow at residues valine 674–leucine 695 and threonine 737–aspartate 761. Serine 786 is modified (phosphoserine). The disordered stretch occupies residues glutamine 1063 to glycine 1086. A compositionally biased stretch (pro residues) spans leucine 1073–arginine 1084. Phosphoserine is present on serine 1102. Polar residues predominate over residues glutamine 1115–serine 1129. The segment at glutamine 1115–arginine 1243 is disordered. Low complexity-rich tracts occupy residues valine 1144–alanine 1170, serine 1187–serine 1202, and serine 1227–arginine 1243.

The protein belongs to the protein kinase superfamily. CK1 Ser/Thr protein kinase family. Interacts with CEP164. Interacts with MCRS1; the interaction is required for recruitment of TTBK2 to the mother centriole.

The protein localises to the cell projection. It is found in the cilium. The protein resides in the cytoplasm. It localises to the cytoskeleton. Its subcellular location is the cilium basal body. The protein localises to the microtubule organizing center. It is found in the centrosome. The protein resides in the centriole. It localises to the cytosol. Its subcellular location is the nucleus. The catalysed reaction is L-seryl-[protein] + ATP = O-phospho-L-seryl-[protein] + ADP + H(+). It catalyses the reaction L-threonyl-[protein] + ATP = O-phospho-L-threonyl-[protein] + ADP + H(+). Its function is as follows. Serine/threonine kinase that acts as a key regulator of ciliogenesis: controls the initiation of ciliogenesis by binding to the distal end of the basal body and promoting the removal of CCP110, which caps the mother centriole, leading to the recruitment of IFT proteins, which build the ciliary axoneme. Has some substrate preference for proteins that are already phosphorylated on a Tyr residue at the +2 position relative to the phosphorylation site. Able to phosphorylate tau on serines in vitro. Phosphorylates MPHOSPH9 which promotes its ubiquitination and proteasomal degradation, loss of MPHOSPH9 facilitates the removal of the CP110-CEP97 complex (a negative regulator of ciliogenesis) from the mother centrioles, promoting the initiation of ciliogenesis. Required for recruitment of CPLANE2 and INTU to the mother centriole. This Mus musculus (Mouse) protein is Tau-tubulin kinase 2 (Ttbk2).